Consider the following 27-residue polypeptide: MIIGAVEAGGTKFVDGVGNEKGEIFER.

It belongs to the ROK (NagC/XylR) family. As to quaternary structure, homodimer. The cofactor is Mg(2+).

It catalyses the reaction D-fructose + ATP = D-fructose 6-phosphate + ADP + H(+). Its activity is regulated as follows. Inhibition by zinc ions. The chain is Fructokinase from Fusobacterium mortiferum.